We begin with the raw amino-acid sequence, 688 residues long: PTS system glucoside-specific EIICBA component (688 aa).

One can recognise a PTS EIIC type-1 domain in the interval 3-427 (KKLFGQLQRI…FKLKTPGRED (425 aa)). 10 consecutive transmembrane segments (helical) span residues 12–32 (IGKA…LLAF), 81–101 (LGLA…YLIM), 137–157 (LVLG…MGAL), 182–202 (FVPI…SFAW), 223–243 (LTTF…LHHI), 284–304 (AFTT…AFAI), 315–335 (VVGG…ITEP), 340–360 (FLFV…TSFL), 364–384 (LLGV…ILYG), and 395–415 (LVIP…DFAI). One can recognise a PTS EIIB type-1 domain in the interval 438-519 (AKLPFDVLDA…AKIMSGEITK (82 aa)). The active-site Phosphocysteine intermediate; for EIIB activity is the Cys460. A PTS EIIA type-1 domain is found at 560–664 (DQVFAGKMMG…SIVTPMIITN (105 aa)). His612 (tele-phosphohistidine intermediate; for EIIA activity) is an active-site residue.

Its subcellular location is the cell membrane. The phosphoenolpyruvate-dependent sugar phosphotransferase system (sugar PTS), a major carbohydrate active -transport system, catalyzes the phosphorylation of incoming sugar substrates concomitantly with their translocation across the cell membrane. This system is involved in alpha- and beta-glucoside transport. This is PTS system glucoside-specific EIICBA component (glcB) from Staphylococcus aureus (strain Mu3 / ATCC 700698).